Reading from the N-terminus, the 812-residue chain is DNA replication licensing factor MCM3 (812 aa).

The residue at position 2 (alanine 2) is an N-acetylalanine. Serine 160 is subject to Phosphoserine. Residue lysine 293 is modified to N6-acetyllysine. One can recognise an MCM domain in the interval 295-502 (VFEQLARSLA…QDREISDHVL (208 aa)). Residues glutamine 353, leucine 393, glutamate 394, alanine 395, and alanine 397 each contribute to the ADP site. Residues 477 to 480 (SRFD) carry the Arginine finger motif. At lysine 547 the chain carries N6-acetyllysine. Serine 611 carries the post-translational modification Phosphoserine. Arginine 664 contributes to the ATP binding site. Residues 664–744 (RKKASEDESD…TQDSQKVELS (81 aa)) are disordered. Residues serine 668, serine 672, and serine 681 each carry the phosphoserine modification. Positions 670–681 (DESDLEDEEEKS) are enriched in acidic residues. Residue tyrosine 705 is modified to Phosphotyrosine. Residue serine 708 is modified to Phosphoserine. Phosphothreonine is present on residues threonine 719, threonine 722, and threonine 729. Residues 720–744 (PKTDDSQEKTDDSQETQDSQKVELS) are compositionally biased toward basic and acidic residues. Phosphoserine is present on residues serine 732 and serine 738.

It belongs to the MCM family. Component of the MCM2-7 complex. The complex forms a toroidal hexameric ring with the proposed subunit order MCM2-MCM6-MCM4-MCM7-MCM3-MCM5. Component of the CMG helicase complex, a hexameric ring of related MCM2-7 subunits stabilized by CDC45 and the tetrameric GINS complex. Associated with the replication-specific DNA polymerase alpha. Interacts with MCMBP. Interacts with ANKRD17. Interacts with MCM3AP; this interaction leads to MCM3 acetylation. Post-translationally, acetylated by MCM3AP. In terms of processing, O-glycosylated (O-GlcNAcylated), in a cell cycle-dependent manner.

The protein resides in the nucleus. It is found in the chromosome. The catalysed reaction is ATP + H2O = ADP + phosphate + H(+). Its function is as follows. Acts as a component of the MCM2-7 complex (MCM complex) which is the replicative helicase essential for 'once per cell cycle' DNA replication initiation and elongation in eukaryotic cells. Core component of CDC45-MCM-GINS (CMG) helicase, the molecular machine that unwinds template DNA during replication, and around which the replisome is built. The active ATPase sites in the MCM2-7 ring are formed through the interaction surfaces of two neighboring subunits such that a critical structure of a conserved arginine finger motif is provided in trans relative to the ATP-binding site of the Walker A box of the adjacent subunit. The six ATPase active sites, however, are likely to contribute differentially to the complex helicase activity. Required for the entry in S phase and for cell division. The protein is DNA replication licensing factor MCM3 (Mcm3) of Mus musculus (Mouse).